A 598-amino-acid polypeptide reads, in one-letter code: Elongation factor 4 (598 aa).

Residues 4 to 186 form the tr-type G domain; sequence SHIRNFAIIA…AIVSRLPAPS (183 aa). GTP contacts are provided by residues 16-21 and 133-136; these read DHGKST and NKID.

This sequence belongs to the TRAFAC class translation factor GTPase superfamily. Classic translation factor GTPase family. LepA subfamily.

It localises to the cell inner membrane. The catalysed reaction is GTP + H2O = GDP + phosphate + H(+). In terms of biological role, required for accurate and efficient protein synthesis under certain stress conditions. May act as a fidelity factor of the translation reaction, by catalyzing a one-codon backward translocation of tRNAs on improperly translocated ribosomes. Back-translocation proceeds from a post-translocation (POST) complex to a pre-translocation (PRE) complex, thus giving elongation factor G a second chance to translocate the tRNAs correctly. Binds to ribosomes in a GTP-dependent manner. The protein is Elongation factor 4 of Ehrlichia chaffeensis (strain ATCC CRL-10679 / Arkansas).